We begin with the raw amino-acid sequence, 349 residues long: Interferon-stimulated 20 kDa exonuclease-like 2 (349 aa).

2 disordered regions span residues methionine 1 to proline 100 and alanine 126 to glycine 166. The segment covering proline 14 to alanine 23 has biased composition (basic and acidic residues). Positions lysine 24–proline 47 are enriched in basic residues. Over residues leucine 54–arginine 66 the composition is skewed to basic and acidic residues. Residues threonine 70–serine 87 are compositionally biased toward low complexity. Basic residues predominate over residues isoleucine 130–serine 142. Residues methionine 175–tyrosine 331 form the Exonuclease domain.

The protein localises to the nucleus. It localises to the nucleolus. Its function is as follows. 3'-&gt; 5'-exoribonuclease involved in ribosome biogenesis in the processing of the 12S pre-rRNA. Displays a strong specificity for a 3'-end containing a free hydroxyl group. This chain is Interferon-stimulated 20 kDa exonuclease-like 2 (ISG20L2), found in Bos taurus (Bovine).